Here is a 691-residue protein sequence, read N- to C-terminus: Protein-glutamine gamma-glutamyltransferase E (691 aa).

Tyr-110 carries the post-translational modification Phosphotyrosine. At Thr-111 the chain carries Phosphothreonine. Ca(2+) contacts are provided by Ala-221, Asn-224, Asn-226, and Asp-227. Cys-272 is an active-site residue. Asp-301, Asp-303, Asn-305, Ser-307, and Asp-324 together coordinate Ca(2+). Active-site residues include His-330 and Asp-353. Ca(2+) is bound by residues Asn-393, Thr-414, Glu-442, and Glu-447.

It belongs to the transglutaminase superfamily. Transglutaminase family. As to quaternary structure, consists of two polypeptide chains, which are synthesized as a precursor form of a single polypeptide. Ca(2+) serves as cofactor. Activated by proteolytic processing. In vitro activation is commonly achieved by cleavage with dispase, a neutral bacterial protease. Physiological activation may be catalyzed by CTSL and, to a lesser extent, by CTSS.

It is found in the cytoplasm. It catalyses the reaction L-glutaminyl-[protein] + L-lysyl-[protein] = [protein]-L-lysyl-N(6)-5-L-glutamyl-[protein] + NH4(+). Functionally, catalyzes the calcium-dependent formation of isopeptide cross-links between glutamine and lysine residues in various proteins, as well as the conjugation of polyamines to proteins. Involved in the formation of the cornified envelope (CE), a specialized component consisting of covalent cross-links of proteins beneath the plasma membrane of terminally differentiated keratinocytes. Catalyzes small proline-rich proteins and LOR cross-linking to form small interchain oligomers, which are further cross-linked by TGM1 onto the growing CE scaffold. In hair follicles, involved in cross-linking structural proteins to hardening the inner root sheath. The sequence is that of Protein-glutamine gamma-glutamyltransferase E (TGM3) from Bos taurus (Bovine).